A 329-amino-acid chain; its full sequence is MVKFFQPKISPLPDGIDLKGSTAVVTGASAGMGLELTRQLLQLNISTVILAVRNVAKGENVVKQLRGDPHIRTYNGNATLKVMELDMDKYDSVQRFAKHLRDEIPIVNFLILNAGIGLLKHDRSPSGHDRTLQVNYYSNALLIAELLPYLKASAERTTIPTRITWVGSRAFETTSLQKTPLQPNERVLEHMDKKEFFAPFQRYGDSKLLCLLFMCSLARQIDPKKVIINMLCPGMVNTNMSDVLPVYLRAVINVVKAIRARPVEVGVWIILNAALVAGPDSHGKFLIDKDIASESQYISSPAGQEVQKKIWEETIEELSRLTTLPPEVN.

Residues lysine 57, aspartate 86, asparagine 113, tyrosine 203, and lysine 207 each contribute to the NADP(+) site. Tyrosine 203 (proton acceptor) is an active-site residue. Lysine 207 serves as the catalytic Lowers pKa of active site Tyr.

It belongs to the short-chain dehydrogenases/reductases (SDR) family.

It participates in secondary metabolite biosynthesis. In terms of biological role, short-chain dehydrogenase/reductase; part of the gene cluster that mediates the biosynthesis of the tropolone class of fungal maleic anhydrides. The pathway begins with the synthesis of 3-methylorcinaldehyde by the non-reducing polyketide synthase (PKS) tropA. 3-methylorcinaldehyde is the substrate for the FAD-dependent monooxygenase tropB to yield a dearomatized hydroxycyclohexadione. The 2-oxoglutarate-dependent dioxygenase tropC then performs the oxidative ring expansion to provide the first tropolone metabolite stipitaldehyde. Trop D converts stipitaldehyde into stipitacetal which is in turn converted to stipitalide by the short-chain dehydrogenase/reductase tropE. The next steps involve tropF, tropG, tropH, tropI and tropJ to form successive tropolone maleic anhydrides including stipitaldehydic, stipitatonic and stipitatic acids. The sequence is that of Short-chain dehydrogenase/reductase tropG from Talaromyces stipitatus (strain ATCC 10500 / CBS 375.48 / QM 6759 / NRRL 1006) (Penicillium stipitatum).